Reading from the N-terminus, the 380-residue chain is Histone deacetylase-like amidohydrolase (380 aa).

The Proton donor/acceptor role is filled by H144. Zn(2+) contacts are provided by D181, H183, and D269.

It belongs to the histone deacetylase family. In terms of assembly, homotetramer; dimer of head-to-head dimers. The cofactor is Zn(2+).

With respect to regulation, is inhibited by azobenzenes, stilbenes and arylazopyrazoles. In terms of biological role, probable protein deacetylase that catalyzes deacetylation of acetylated lysine residues. In vitro, exhibits high activity against artificial HDAC (histone deacetylase) substrates containing acetylated and trifluoroacetylated lysine residues. Is not able to deacetylate acetylated polyamines. The polypeptide is Histone deacetylase-like amidohydrolase (Pseudomonas aeruginosa (strain ATCC 15692 / DSM 22644 / CIP 104116 / JCM 14847 / LMG 12228 / 1C / PRS 101 / PAO1)).